A 455-amino-acid chain; its full sequence is Venom prothrombin activator trocarin-D (455 aa).

The N-terminal stretch at 1–20 (MAPQLLLCLILTFLWSLPEA) is a signal peptide. Positions 21–40 (ESNVFLKSKVANRFLQRTKR) are excised as a propeptide. Positions 41-86 (SNSLFEEIRPGNIERECIEEKCSKEEAREVFEDNEKTETFWNVYVD) constitute a Gla domain. 11 positions are modified to 4-carboxyglutamate: Glu46, Glu47, Glu54, Glu56, Glu59, Glu60, Glu65, Glu66, Glu69, Glu72, and Glu75. Cys57 and Cys62 are disulfide-bonded. Residues 86–122 (DGDQCSSNPCHYRGTCKDGIGSYTCTCLPNYEGKNCE) enclose the EGF-like 1; calcium-binding domain. Cystine bridges form between Cys90/Cys101, Cys95/Cys110, Cys112/Cys121, Cys129/Cys140, Cys136/Cys149, Cys151/Cys164, Cys172/Cys328, Cys216/Cys221, Cys236/Cys252, Cys376/Cys390, and Cys401/Cys429. An O-linked (Hex...) serine glycan is attached at Ser92. Residues 129–164 (CRVDNGNCWHFCKRVQSETQCSCAESYRLGVDGHSC) form the EGF-like 2 domain. Positions 182-209 (REASLPDFVQSQKATLLKKSDNPSPDIR) are cleaved as a propeptide — activation peptide. The Peptidase S1 domain maps to 210 to 453 (IVNGMDCKLG…FIPWIKKIMS (244 aa)). His251 (charge relay system) is an active-site residue. Asn254 carries N-linked (GlcNAc...) asparagine glycosylation. The Charge relay system role is filled by Asp308. The Charge relay system role is filled by Ser405.

It belongs to the peptidase S1 family. Snake venom subfamily. In terms of assembly, heterodimer of a light chain and a heavy chain; disulfide-linked. In terms of processing, gamma-carboxyglutamate residues are formed by vitamin K dependent carboxylation. These residues are essential for the binding of calcium. The O-linked saccharides at Ser-92 are a mixture of Xyl-Glc, and Glc along with smaller amounts of Xyl-GlcNAc, GlcNAc, Gal, GalNAc, Xyl-Gal, and Xyl-GalNAc, suggesting that the glycosyl transferases responsible for this modification are non-specific. The N-linked carbohydrate at Asn-254 (Asn-45 of the heavy chain) is a sialylated and diantennary oligosaccharide. Expressed by the venom gland.

Its subcellular location is the secreted. The enzyme catalyses Selective cleavage of Arg-|-Thr and then Arg-|-Ile bonds in prothrombin to form thrombin.. With respect to regulation, activated by calcium and phospholipids. Its function is as follows. Snake prothrombin activator that attacks the hemostatic system of prey. This protein is functionally similar to blood coagulation factor Xa. Induces cyanosis and death in mice at 1 mg/kg body weight during blood clotting. The polypeptide is Venom prothrombin activator trocarin-D (Tropidechis carinatus (Australian rough-scaled snake)).